The chain runs to 216 residues: MKTLNLFPCEERPSLLEFESLVRRQGYACIAGIDEAGRGPLAGPVVAAAVILPNGVELPGVNDSKKLSPVKRNELFDLIMASASAVGVGSSDAGLIDEINILQATLAAMKQAVSMLCIPPDYLLIDGISKVPLSIPQKTIKKGDSLSLSIAAASIIAKVSRDRLMMDYETRFPGYGFAAHKGYGCVSHMAAIAELGPCAIHRKTFRGVKEYVRSEE.

The region spanning 28 to 216 is the RNase H type-2 domain; the sequence is ACIAGIDEAG…GVKEYVRSEE (189 aa). A divalent metal cation contacts are provided by Asp-34, Glu-35, and Asp-126.

This sequence belongs to the RNase HII family. Requires Mn(2+) as cofactor. It depends on Mg(2+) as a cofactor.

It localises to the cytoplasm. It carries out the reaction Endonucleolytic cleavage to 5'-phosphomonoester.. Its function is as follows. Endonuclease that specifically degrades the RNA of RNA-DNA hybrids. The chain is Ribonuclease HII from Geotalea uraniireducens (strain Rf4) (Geobacter uraniireducens).